A 276-amino-acid polypeptide reads, in one-letter code: MKGQILREMKVLNAIDPGFEVQRRVAFIKSKLKQSSTSTLVLGISGGVDSSLAGRLCQLAVDELNSDASGNHYQFIAVRLPYDVQKDEDEAQLACQFIQPSKQVTVNVKQGVDGVHCETLAAVEAAGIALPEADKIDFVKGNVKARMRMVAQYEIAGLVAGLVVGTDHSAENITGFYTKWGDGACDLAPLFGLNKRQVRQLAAFLGAPDKLVIKAPTADLEENKPQLEDEVALGLTYEQIDDFLEGKEVSEFVNDKLVGIYRATQHKREPIPTIYD.

43–50 (GISGGVDS) lines the ATP pocket. Position 49 (aspartate 49) interacts with Mg(2+). Arginine 146 is a deamido-NAD(+) binding site. Threonine 166 is an ATP binding site. Glutamate 171 is a binding site for Mg(2+). Positions 179 and 186 each coordinate deamido-NAD(+). Positions 195 and 217 each coordinate ATP. 266–267 (HK) serves as a coordination point for deamido-NAD(+).

This sequence belongs to the NAD synthetase family. In terms of assembly, homodimer.

It catalyses the reaction deamido-NAD(+) + NH4(+) + ATP = AMP + diphosphate + NAD(+) + H(+). It functions in the pathway cofactor biosynthesis; NAD(+) biosynthesis; NAD(+) from deamido-NAD(+) (ammonia route): step 1/1. Catalyzes the ATP-dependent amidation of deamido-NAD to form NAD. Uses ammonia as a nitrogen source. This chain is NH(3)-dependent NAD(+) synthetase, found in Shewanella pealeana (strain ATCC 700345 / ANG-SQ1).